Reading from the N-terminus, the 492-residue chain is GTPase-GDP dissociation stimulator arz1 (492 aa).

It is found in the cytoplasm. Its subcellular location is the nucleus. In terms of biological role, probably acts as a GEF (guanine nucleotide exchange factor) for the Rho family of small GTP-binding proteins (G proteins) that stimulates the dissociation of GDP to enable subsequent binding of GTP. May also chaperone the processing and/or trafficking of small GTPases independently of GEF activity. May be involved in the control of polarized cell growth via CDC42-mediated signaling. May also be involved in the control of cell-wall organization via RHO1-mediated signaling. The polypeptide is GTPase-GDP dissociation stimulator arz1 (Schizosaccharomyces pombe (strain 972 / ATCC 24843) (Fission yeast)).